Here is a 144-residue protein sequence, read N- to C-terminus: Prefoldin subunit alpha (144 aa).

This sequence belongs to the prefoldin alpha subunit family. As to quaternary structure, heterohexamer of two alpha and four beta subunits.

Its subcellular location is the cytoplasm. Its function is as follows. Molecular chaperone capable of stabilizing a range of proteins. Seems to fulfill an ATP-independent, HSP70-like function in archaeal de novo protein folding. The polypeptide is Prefoldin subunit alpha (Methanococcus maripaludis (strain C5 / ATCC BAA-1333)).